We begin with the raw amino-acid sequence, 728 residues long: Elongation factor 2 (728 aa).

Residues 19 to 261 form the tr-type G domain; that stretch reads EHIRNIAIAA…MVCEHFPNPV (243 aa). Residues 28-35, 94-98, and 148-151 contribute to the GTP site; these read AHVDHGKT, DTPGH, and NKVD. Diphthamide is present on histidine 596.

It belongs to the TRAFAC class translation factor GTPase superfamily. Classic translation factor GTPase family. EF-G/EF-2 subfamily.

Its subcellular location is the cytoplasm. Catalyzes the GTP-dependent ribosomal translocation step during translation elongation. During this step, the ribosome changes from the pre-translocational (PRE) to the post-translocational (POST) state as the newly formed A-site-bound peptidyl-tRNA and P-site-bound deacylated tRNA move to the P and E sites, respectively. Catalyzes the coordinated movement of the two tRNA molecules, the mRNA and conformational changes in the ribosome. The chain is Elongation factor 2 from Haloarcula marismortui (strain ATCC 43049 / DSM 3752 / JCM 8966 / VKM B-1809) (Halobacterium marismortui).